Here is a 413-residue protein sequence, read N- to C-terminus: uncharacterized protein (413 aa).

An N6-(pyridoxal phosphate)lysine modification is found at Lys-265.

This sequence belongs to the threonine aldolase family. The cofactor is pyridoxal 5'-phosphate.

This is an uncharacterized protein from Caenorhabditis elegans.